Reading from the N-terminus, the 404-residue chain is Cysteine desulfurase IscS (404 aa).

Pyridoxal 5'-phosphate contacts are provided by residues 75-76, N155, Q183, and 203-205; these read AT and SGH. K206 carries the post-translational modification N6-(pyridoxal phosphate)lysine. T243 contributes to the pyridoxal 5'-phosphate binding site. C328 (cysteine persulfide intermediate) is an active-site residue. C328 provides a ligand contact to [2Fe-2S] cluster.

This sequence belongs to the class-V pyridoxal-phosphate-dependent aminotransferase family. NifS/IscS subfamily. As to quaternary structure, homodimer. Forms a heterotetramer with IscU, interacts with other sulfur acceptors. Pyridoxal 5'-phosphate is required as a cofactor.

The protein localises to the cytoplasm. It carries out the reaction (sulfur carrier)-H + L-cysteine = (sulfur carrier)-SH + L-alanine. It participates in cofactor biosynthesis; iron-sulfur cluster biosynthesis. In terms of biological role, master enzyme that delivers sulfur to a number of partners involved in Fe-S cluster assembly, tRNA modification or cofactor biosynthesis. Catalyzes the removal of elemental sulfur atoms from cysteine to produce alanine. Functions as a sulfur delivery protein for Fe-S cluster synthesis onto IscU, an Fe-S scaffold assembly protein, as well as other S acceptor proteins. The chain is Cysteine desulfurase IscS from Shewanella baltica (strain OS185).